A 342-amino-acid chain; its full sequence is tRNA N6-adenosine threonylcarbamoyltransferase (342 aa).

Fe cation contacts are provided by His-115 and His-119. Substrate contacts are provided by residues Leu-138–Gly-142, Asp-171, Gly-184, and Asn-276. Asp-304 lines the Fe cation pocket.

It belongs to the KAE1 / TsaD family. It depends on Fe(2+) as a cofactor.

It is found in the cytoplasm. The catalysed reaction is L-threonylcarbamoyladenylate + adenosine(37) in tRNA = N(6)-L-threonylcarbamoyladenosine(37) in tRNA + AMP + H(+). Functionally, required for the formation of a threonylcarbamoyl group on adenosine at position 37 (t(6)A37) in tRNAs that read codons beginning with adenine. Is involved in the transfer of the threonylcarbamoyl moiety of threonylcarbamoyl-AMP (TC-AMP) to the N6 group of A37, together with TsaE and TsaB. TsaD likely plays a direct catalytic role in this reaction. The polypeptide is tRNA N6-adenosine threonylcarbamoyltransferase (Dichelobacter nodosus (strain VCS1703A)).